Reading from the N-terminus, the 312-residue chain is Pantothenate synthetase (312 aa).

ATP is bound at residue 42–49; the sequence is MGALHTGH. Catalysis depends on histidine 49, which acts as the Proton donor. Glutamine 73 contributes to the (R)-pantoate binding site. A beta-alanine-binding site is contributed by glutamine 73. 159 to 162 lines the ATP pocket; it reads GEKD. Glutamine 165 is a binding site for (R)-pantoate. Residues valine 188 and 196-199 contribute to the ATP site; that span reads LSSR.

This sequence belongs to the pantothenate synthetase family. In terms of assembly, homodimer.

The protein localises to the cytoplasm. The enzyme catalyses (R)-pantoate + beta-alanine + ATP = (R)-pantothenate + AMP + diphosphate + H(+). It participates in cofactor biosynthesis; (R)-pantothenate biosynthesis; (R)-pantothenate from (R)-pantoate and beta-alanine: step 1/1. Functionally, catalyzes the condensation of pantoate with beta-alanine in an ATP-dependent reaction via a pantoyl-adenylate intermediate. This chain is Pantothenate synthetase, found in Rhodococcus jostii (strain RHA1).